The sequence spans 181 residues: Oligoribonuclease (181 aa).

The region spanning L8–L171 is the Exonuclease domain. The active site involves Y129.

Belongs to the oligoribonuclease family.

It is found in the cytoplasm. Its function is as follows. 3'-to-5' exoribonuclease specific for small oligoribonucleotides. The sequence is that of Oligoribonuclease from Colwellia psychrerythraea (strain 34H / ATCC BAA-681) (Vibrio psychroerythus).